A 122-amino-acid chain; its full sequence is Large ribosomal subunit protein uL14 (122 aa).

It belongs to the universal ribosomal protein uL14 family. As to quaternary structure, part of the 50S ribosomal subunit. Forms a cluster with proteins L3 and L19. In the 70S ribosome, L14 and L19 interact and together make contacts with the 16S rRNA in bridges B5 and B8.

Functionally, binds to 23S rRNA. Forms part of two intersubunit bridges in the 70S ribosome. This chain is Large ribosomal subunit protein uL14, found in Brevibacillus brevis (strain 47 / JCM 6285 / NBRC 100599).